A 215-amino-acid chain; its full sequence is Cytochrome b6 (215 aa).

A helical transmembrane segment spans residues 32 to 52 (IFYCLGGITLTCFLVQVATGF). Heme c is bound at residue C35. Residues H86 and H100 each contribute to the heme b site. The next 3 helical transmembrane spans lie at 90 to 110 (ASMMVLMMILHIFRVYLTGGF), 116 to 136 (LTWVTGVILAVLTVSFGVTGY), and 186 to 206 (LHTFVLPLLTAIFMLMHFLMI). H187 and H202 together coordinate heme b.

The protein belongs to the cytochrome b family. PetB subfamily. As to quaternary structure, the 4 large subunits of the cytochrome b6-f complex are cytochrome b6, subunit IV (17 kDa polypeptide, PetD), cytochrome f and the Rieske protein, while the 4 small subunits are PetG, PetL, PetM and PetN. The complex functions as a dimer. The cofactor is heme b. Heme c is required as a cofactor.

The protein resides in the plastid. Its subcellular location is the chloroplast thylakoid membrane. Functionally, component of the cytochrome b6-f complex, which mediates electron transfer between photosystem II (PSII) and photosystem I (PSI), cyclic electron flow around PSI, and state transitions. This chain is Cytochrome b6, found in Marchantia polymorpha (Common liverwort).